The sequence spans 120 residues: Dihydroneopterin aldolase (120 aa).

Substrate is bound by residues E21, Y53, and 72–73; that span reads VE. K99 (proton donor/acceptor) is an active-site residue.

It belongs to the DHNA family.

It carries out the reaction 7,8-dihydroneopterin = 6-hydroxymethyl-7,8-dihydropterin + glycolaldehyde. The protein operates within cofactor biosynthesis; tetrahydrofolate biosynthesis; 2-amino-4-hydroxy-6-hydroxymethyl-7,8-dihydropteridine diphosphate from 7,8-dihydroneopterin triphosphate: step 3/4. In terms of biological role, catalyzes the conversion of 7,8-dihydroneopterin to 6-hydroxymethyl-7,8-dihydropterin. The protein is Dihydroneopterin aldolase (folB) of Bacillus subtilis (strain 168).